We begin with the raw amino-acid sequence, 211 residues long: Cell division protein SepF (211 aa).

Residues 15–26 (DTDEVNEVEEEV) are compositionally biased toward acidic residues. A disordered region spans residues 15 to 111 (DTDEVNEVEE…ETYQAQTTVQ (97 aa)). Polar residues-rich tracts occupy residues 44–57 (IPSQ…QNPA), 64–81 (ARSQ…PNRQ), and 91–111 (RESV…TTVQ).

Belongs to the SepF family. In terms of assembly, homodimer. Interacts with FtsZ.

It is found in the cytoplasm. In terms of biological role, cell division protein that is part of the divisome complex and is recruited early to the Z-ring. Probably stimulates Z-ring formation, perhaps through the cross-linking of FtsZ protofilaments. Its function overlaps with FtsA. The polypeptide is Cell division protein SepF (Streptococcus uberis (strain ATCC BAA-854 / 0140J)).